Consider the following 68-residue polypeptide: UPF0435 protein Sca_1453 (68 aa).

Belongs to the UPF0435 family.

This is UPF0435 protein Sca_1453 from Staphylococcus carnosus (strain TM300).